The chain runs to 202 residues: Twist-related protein 1 (202 aa).

The span at 1 to 18 (MMQDVSSSPVSPADDSLS) shows a compositional bias: low complexity. The tract at residues 1 to 105 (MMQDVSSSPV…GGGSPQSYEE (105 aa)) is disordered. A compositionally biased stretch (basic residues) spans 34-43 (RGGRKRRSSR). Gly residues-rich tracts occupy residues 46-65 (AGGGAGPGGAAGGGVGGGDE) and 80-99 (GCGGGGGAGGGGGSSSGGGS). A bHLH domain is found at 108–159 (TQRVMANVRERQRTQSLNEAFAALRKIIPTLPSDKLSKIQTLKLAARYIDFL). The segment at 161–191 (QVLQSDELDSKMASCSYVAHERLSYAFSVWR) is sufficient for transactivation activity.

As to quaternary structure, efficient DNA binding requires dimerization with another bHLH protein. Homodimer or heterodimer with E proteins such as TCF3. ID1 binds preferentially to TCF3 but does not interact efficiently with TWIST1 so ID1 levels control the amount of TCF3 available to dimerize with TWIST1 and thus determine the type of dimer formed. In terms of tissue distribution, subset of mesodermal cells.

The protein resides in the nucleus. Functionally, acts as a transcriptional regulator. Inhibits myogenesis by sequestrating E proteins, inhibiting trans-activation by MEF2, and inhibiting DNA-binding by MYOD1 through physical interaction. This interaction probably involves the basic domains of both proteins. Also represses expression of pro-inflammatory cytokines such as TNFA and IL1B. Regulates cranial suture patterning and fusion. Activates transcription as a heterodimer with E proteins. Regulates gene expression differentially, depending on dimer composition. Homodimers induce expression of FGFR2 and POSTN while heterodimers repress FGFR2 and POSTN expression and induce THBS1 expression. Heterodimerization is also required for osteoblast differentiation. Represses the activity of the circadian transcriptional activator: NPAS2-BMAL1 heterodimer. This Homo sapiens (Human) protein is Twist-related protein 1 (TWIST1).